A 666-amino-acid chain; its full sequence is Adenylylsulfate reductase subunit alpha (666 aa).

FAD-binding positions include 32–35 (GGMG), 60–61 (DK), 67–69 (SGA), Asn-78, Ile-193, Ser-259, Ser-417, 461–462 (AD), and Ser-472.

It belongs to the FAD-dependent oxidoreductase 2 family. In terms of assembly, heterodimer composed of AprA and AprB. The heterodimers can dimerize to form heterotetramers. The cofactor is FAD.

The protein resides in the cytoplasm. It carries out the reaction sulfite + A + AMP + 2 H(+) = adenosine 5'-phosphosulfate + AH2. Functionally, catalytic subunit of the adenylylsulfate reductase which catalyzes reversibly the reduction of adenosine 5'-phosphosulfate (APS) to sulfite and AMP during dissimilatory sulfate reduction. The chain is Adenylylsulfate reductase subunit alpha from Megalodesulfovibrio gigas (strain ATCC 19364 / DSM 1382 / NCIMB 9332 / VKM B-1759) (Desulfovibrio gigas).